The chain runs to 124 residues: Small ribosomal subunit protein uS12 (124 aa).

Position 89 is a 3-methylthioaspartic acid (Asp89). The segment at 105-124 (QGVKNRKQARSRYGAKKEKS) is disordered. Residues 108-118 (KNRKQARSRYG) are compositionally biased toward basic residues.

This sequence belongs to the universal ribosomal protein uS12 family. As to quaternary structure, part of the 30S ribosomal subunit. Contacts proteins S8 and S17. May interact with IF1 in the 30S initiation complex.

Its function is as follows. With S4 and S5 plays an important role in translational accuracy. Interacts with and stabilizes bases of the 16S rRNA that are involved in tRNA selection in the A site and with the mRNA backbone. Located at the interface of the 30S and 50S subunits, it traverses the body of the 30S subunit contacting proteins on the other side and probably holding the rRNA structure together. The combined cluster of proteins S8, S12 and S17 appears to hold together the shoulder and platform of the 30S subunit. This Mycobacterium sp. (strain JLS) protein is Small ribosomal subunit protein uS12.